The following is a 408-amino-acid chain: Adenylosuccinate synthetase (408 aa).

GTP is bound by residues 12-18 and 40-42; these read GDEGKGK and GHT. D13 functions as the Proton acceptor in the catalytic mechanism. D13 and G40 together coordinate Mg(2+). IMP contacts are provided by residues 13 to 16, 38 to 41, T121, R135, Q213, T228, and R292; these read DEGK and NAGH. H41 serves as the catalytic Proton donor. Residue 288–294 coordinates substrate; that stretch reads TTTGRPR. Residues R294, 320–322, and 393–395 contribute to the GTP site; these read KLD and STS.

It belongs to the adenylosuccinate synthetase family. Homodimer. Mg(2+) serves as cofactor.

The protein localises to the cytoplasm. It catalyses the reaction IMP + L-aspartate + GTP = N(6)-(1,2-dicarboxyethyl)-AMP + GDP + phosphate + 2 H(+). It participates in purine metabolism; AMP biosynthesis via de novo pathway; AMP from IMP: step 1/2. Plays an important role in the de novo pathway of purine nucleotide biosynthesis. Catalyzes the first committed step in the biosynthesis of AMP from IMP. The chain is Adenylosuccinate synthetase from Thermus thermophilus (strain ATCC BAA-163 / DSM 7039 / HB27).